Here is a 113-residue protein sequence, read N- to C-terminus: FK506-binding protein 1B (113 aa).

In terms of domain architecture, PPIase FKBP-type spans 19–113 (GQTVVIEYTG…IFDVYLKGLQ (95 aa)).

The protein belongs to the FKBP-type PPIase family. FKBP1 subfamily.

Its subcellular location is the cytoplasm. It catalyses the reaction [protein]-peptidylproline (omega=180) = [protein]-peptidylproline (omega=0). With respect to regulation, inhibited by both FK506 and rapamycin. Functionally, PPIases accelerate the folding of proteins. It catalyzes the cis-trans isomerization of proline imidic peptide bonds in oligopeptides. The polypeptide is FK506-binding protein 1B (fkr-3) (Neurospora crassa (strain ATCC 24698 / 74-OR23-1A / CBS 708.71 / DSM 1257 / FGSC 987)).